The sequence spans 623 residues: NADPH-dependent diflavin oxidoreductase 1 (623 aa).

The Flavodoxin-like domain maps to 8–153 (LLVLYASQTG…TLDPWMLSLW (146 aa)). FMN is bound by residues 14–19 (SQTGNA), 62–65 (STTG), and aspartate 135. The 247-residue stretch at 221–467 (KPDCFLKMTR…SLPAPSQSLP (247 aa)) folds into the FAD-binding FR-type domain. FAD contacts are provided by residues arginine 369, 399–402 (RAFS), and 433–436 (GLCS). Residues threonine 475, 541–542 (SR), 547–551 (KVYVQ), and aspartate 583 contribute to the NADP(+) site. Tryptophan 622 contacts FAD.

Belongs to the NADPH-dependent diflavin oxidoreductase NDOR1 family. This sequence in the N-terminal section; belongs to the flavodoxin family. The protein in the C-terminal section; belongs to the flavoprotein pyridine nucleotide cytochrome reductase family. Interacts with At5g18400. Requires FAD as cofactor. FMN is required as a cofactor. In terms of tissue distribution, widely expressed.

It is found in the cytoplasm. It localises to the nucleus. It catalyses the reaction 2 oxidized [2Fe-2S]-[protein] + NADPH = 2 reduced [2Fe-2S]-[protein] + NADP(+) + H(+). Functionally, NADPH-dependent reductase which is a central component of the cytosolic iron-sulfur (Fe-S) protein assembly (CIA) machinery. Transfers electrons from NADPH via its FAD and FMN prosthetic groups to the [2Fe-2S] cluster of the anamorsin/DRE2 homolog, another key component of the CIA machinery. In turn, this reduced cluster provides electrons for assembly of cytosolic iron-sulfur cluster proteins. Catalyzes the NADP-dependent reduction of cytochrome c, but not cytochrome P450 in vitro. Required for embryo development. The chain is NADPH-dependent diflavin oxidoreductase 1 (ATR3) from Arabidopsis thaliana (Mouse-ear cress).